A 412-amino-acid polypeptide reads, in one-letter code: UPF0754 membrane protein MAE_37850 (412 aa).

2 helical membrane-spanning segments follow: residues 3 to 23 (LPTL…GYFT) and 387 to 407 (IVNL…IILI).

This sequence belongs to the UPF0754 family.

Its subcellular location is the cell inner membrane. This chain is UPF0754 membrane protein MAE_37850, found in Microcystis aeruginosa (strain NIES-843 / IAM M-2473).